The chain runs to 73 residues: Translation initiation factor IF-1 (73 aa).

Residues 1–73 (MSEKEAGIEV…SRGRITYRDK (73 aa)) form the S1-like domain.

This sequence belongs to the IF-1 family. As to quaternary structure, component of the 30S ribosomal translation pre-initiation complex which assembles on the 30S ribosome in the order IF-2 and IF-3, IF-1 and N-formylmethionyl-tRNA(fMet); mRNA recruitment can occur at any time during PIC assembly.

Its subcellular location is the cytoplasm. Its function is as follows. One of the essential components for the initiation of protein synthesis. Stabilizes the binding of IF-2 and IF-3 on the 30S subunit to which N-formylmethionyl-tRNA(fMet) subsequently binds. Helps modulate mRNA selection, yielding the 30S pre-initiation complex (PIC). Upon addition of the 50S ribosomal subunit IF-1, IF-2 and IF-3 are released leaving the mature 70S translation initiation complex. The sequence is that of Translation initiation factor IF-1 from Anaeromyxobacter dehalogenans (strain 2CP-C).